The primary structure comprises 187 residues: GTP cyclohydrolase 1 (187 aa).

Cys-76, His-79, and Cys-148 together coordinate Zn(2+).

Belongs to the GTP cyclohydrolase I family. In terms of assembly, toroid-shaped homodecamer, composed of two pentamers of five dimers.

The enzyme catalyses GTP + H2O = 7,8-dihydroneopterin 3'-triphosphate + formate + H(+). The protein operates within cofactor biosynthesis; 7,8-dihydroneopterin triphosphate biosynthesis; 7,8-dihydroneopterin triphosphate from GTP: step 1/1. The chain is GTP cyclohydrolase 1 from Streptococcus agalactiae serotype V (strain ATCC BAA-611 / 2603 V/R).